We begin with the raw amino-acid sequence, 252 residues long: MTFLEEILAQKEVEVAKMPLEQVAEKRKTYSFYEFLKANTNTMQLIAEVKRASPSKGEINMGVNPVLQAKSYQAAGAGMISVLTDPVFFKGSIEDLREVAKNVGIPVLCKDFIISEKQLIRARNAGATVVLLIISALTEEKLITLFEQALALDLEVLVEVHDQEELAVAQKIGAQLIGVNNRNLHTFEVDIAVSERLASDFSSDACFISESGFRTAEDVARVSQKYDAVLVGEALMREATPEVAAKSLKVTR.

The protein belongs to the TrpC family.

It catalyses the reaction 1-(2-carboxyphenylamino)-1-deoxy-D-ribulose 5-phosphate + H(+) = (1S,2R)-1-C-(indol-3-yl)glycerol 3-phosphate + CO2 + H2O. It functions in the pathway amino-acid biosynthesis; L-tryptophan biosynthesis; L-tryptophan from chorismate: step 4/5. This chain is Indole-3-glycerol phosphate synthase, found in Listeria monocytogenes serovar 1/2a (strain ATCC BAA-679 / EGD-e).